We begin with the raw amino-acid sequence, 101 residues long: Small ribosomal subunit protein bS18c (101 aa).

The protein belongs to the bacterial ribosomal protein bS18 family. In terms of assembly, part of the 30S ribosomal subunit.

It localises to the plastid. Its subcellular location is the chloroplast. The sequence is that of Small ribosomal subunit protein bS18c from Solanum bulbocastanum (Wild potato).